The primary structure comprises 273 residues: Large ribosomal subunit protein uL2 (273 aa).

The interval 224-260 (AMNPVDHPHGGGEGKTSGGRHPVTPWGKKTKGKKTRK) is disordered. Residues 251 to 260 (KKTKGKKTRK) are compositionally biased toward basic residues.

This sequence belongs to the universal ribosomal protein uL2 family. In terms of assembly, part of the 50S ribosomal subunit. Forms a bridge to the 30S subunit in the 70S ribosome.

In terms of biological role, one of the primary rRNA binding proteins. Required for association of the 30S and 50S subunits to form the 70S ribosome, for tRNA binding and peptide bond formation. It has been suggested to have peptidyltransferase activity; this is somewhat controversial. Makes several contacts with the 16S rRNA in the 70S ribosome. The sequence is that of Large ribosomal subunit protein uL2 from Orientia tsutsugamushi (strain Ikeda) (Rickettsia tsutsugamushi).